Reading from the N-terminus, the 330-residue chain is Transcription factor zip1 (330 aa).

Residues 133 to 148 (SKETQEKTSSQRELFE) show a composition bias toward basic and acidic residues. Disordered regions lie at residues 133–165 (SKET…SSSS) and 238–277 (PSLS…NTAA). The span at 150 to 165 (KSSVASASKDNVSSSS) shows a compositional bias: low complexity. Over residues 244-262 (KGAQSPNANSKRTKATSAI) the composition is skewed to polar residues. The bZIP domain occupies 264 to 327 (TAAEEDKRRR…NWLKGLIRPT (64 aa)). Residues 270–288 (KRRRNTAASARFRIKKKLK) are basic motif. The tract at residues 292 to 320 (LERTAKELTEKVAILETRVRELEMENNWL) is leucine-zipper.

Belongs to the bZIP family. As to quaternary structure, interacts with pof1.

Its subcellular location is the nucleus. Its function is as follows. Mediates cell growth arrest in response to cadmium exposure, which is essential to maintain cell viability. Regulates cadmium stress specific genes. In Schizosaccharomyces pombe (strain 972 / ATCC 24843) (Fission yeast), this protein is Transcription factor zip1 (zip1).